The sequence spans 361 residues: Putative agmatine deiminase (361 aa).

The active-site Amidino-cysteine intermediate is cysteine 354.

Belongs to the agmatine deiminase family.

The catalysed reaction is agmatine + H2O = N-carbamoylputrescine + NH4(+). This chain is Putative agmatine deiminase, found in Streptococcus pneumoniae (strain Taiwan19F-14).